Consider the following 142-residue polypeptide: Large ribosomal subunit protein uL16 (142 aa).

It belongs to the universal ribosomal protein uL16 family. As to quaternary structure, part of the 50S ribosomal subunit.

Its function is as follows. Binds 23S rRNA and is also seen to make contacts with the A and possibly P site tRNAs. The polypeptide is Large ribosomal subunit protein uL16 (Thermotoga maritima (strain ATCC 43589 / DSM 3109 / JCM 10099 / NBRC 100826 / MSB8)).